The sequence spans 756 residues: Pro-neuregulin-2, membrane-bound isoform (756 aa).

The propeptide occupies M1 to A19. The Extracellular portion of the chain corresponds to C20–R315. N55, N186, and N254 each carry an N-linked (GlcNAc...) asparagine glycan. In terms of domain architecture, Ig-like C2-type spans P145–S240. Cystine bridges form between C165/C219, C253/C267, C261/C278, and C280/C289. In terms of domain architecture, EGF-like spans H249–Q290. An N-linked (GlcNAc...) asparagine glycan is attached at N296. The helical transmembrane segment at V316–A336 threads the bilayer. The Cytoplasmic portion of the chain corresponds to Y337 to L756. Disordered regions lie at residues T402–L439, L557–R578, A608–L694, and L711–L756. The span at S404–S416 shows a compositional bias: low complexity. Residues H424 to E437 are compositionally biased toward basic and acidic residues. Low complexity predominate over residues L654–A682.

This sequence belongs to the neuregulin family. As to quaternary structure, interacts with ERBB3 and ERBB4. Proteolytic cleavage close to the plasma membrane on the external face leads to the release of the soluble growth factor form. In terms of processing, extensive glycosylation precedes the proteolytic cleavage. As to expression, highest expression in the brain, with lower levels in the lung. In the cerebellum, found in granule and Purkinje cells.

It is found in the cell membrane. The protein localises to the secreted. Functionally, direct ligand for ERBB3 and ERBB4 tyrosine kinase receptors. Concomitantly recruits ERBB1 and ERBB2 coreceptors, resulting in ligand-stimulated tyrosine phosphorylation and activation of the ERBB receptors. May also promote the heterodimerization with the EGF receptor. This Mus musculus (Mouse) protein is Pro-neuregulin-2, membrane-bound isoform (Nrg2).